Here is a 253-residue protein sequence, read N- to C-terminus: Ubiquinone biosynthesis O-methyltransferase (253 aa).

S-adenosyl-L-methionine contacts are provided by R47, G78, D99, and M141.

It belongs to the methyltransferase superfamily. UbiG/COQ3 family.

It catalyses the reaction a 3-demethylubiquinol + S-adenosyl-L-methionine = a ubiquinol + S-adenosyl-L-homocysteine + H(+). The enzyme catalyses a 3-(all-trans-polyprenyl)benzene-1,2-diol + S-adenosyl-L-methionine = a 2-methoxy-6-(all-trans-polyprenyl)phenol + S-adenosyl-L-homocysteine + H(+). The protein operates within cofactor biosynthesis; ubiquinone biosynthesis. In terms of biological role, O-methyltransferase that catalyzes the 2 O-methylation steps in the ubiquinone biosynthetic pathway. The sequence is that of Ubiquinone biosynthesis O-methyltransferase from Rhodopseudomonas palustris (strain HaA2).